The sequence spans 123 residues: Small ribosomal subunit protein uS12 (123 aa).

D89 carries the post-translational modification 3-methylthioaspartic acid.

The protein belongs to the universal ribosomal protein uS12 family. In terms of assembly, part of the 30S ribosomal subunit. Contacts proteins S8 and S17. May interact with IF1 in the 30S initiation complex.

In terms of biological role, with S4 and S5 plays an important role in translational accuracy. Its function is as follows. Interacts with and stabilizes bases of the 16S rRNA that are involved in tRNA selection in the A site and with the mRNA backbone. Located at the interface of the 30S and 50S subunits, it traverses the body of the 30S subunit contacting proteins on the other side and probably holding the rRNA structure together. The combined cluster of proteins S8, S12 and S17 appears to hold together the shoulder and platform of the 30S subunit. This chain is Small ribosomal subunit protein uS12, found in Orientia tsutsugamushi (strain Ikeda) (Rickettsia tsutsugamushi).